Consider the following 236-residue polypeptide: Eukaryotic translation initiation factor 3 subunit J (236 aa).

Disordered stretches follow at residues 1–88 (MADD…LANM) and 188–236 (SEKQ…DDFM). Positions 28-46 (GEDDDEDVKESWEDEEEKK) are enriched in acidic residues. 3 stretches are compositionally biased toward basic and acidic residues: residues 47-58 (DEEKPTKTEAPV), 68-88 (AKLE…LANM), and 188-197 (SEKQKMEKAN). Coiled coils occupy residues 61-112 (KPNK…LKSA) and 174-209 (ADIK…KGKV). The segment covering 201–210 (SAAKAKGKVS) has biased composition (basic residues).

Belongs to the eIF-3 subunit J family. As to quaternary structure, component of the eukaryotic translation initiation factor 3 (eIF-3) complex. The eIF-3 complex interacts with pix.

It localises to the cytoplasm. Component of the eukaryotic translation initiation factor 3 (eIF-3) complex, which is involved in protein synthesis of a specialized repertoire of mRNAs and, together with other initiation factors, stimulates binding of mRNA and methionyl-tRNAi to the 40S ribosome. The eIF-3 complex specifically targets and initiates translation of a subset of mRNAs involved in cell proliferation. The chain is Eukaryotic translation initiation factor 3 subunit J from Drosophila virilis (Fruit fly).